A 345-amino-acid chain; its full sequence is Heat-inducible transcription repressor HrcA (345 aa).

Belongs to the HrcA family.

In terms of biological role, negative regulator of class I heat shock genes (grpE-dnaK-dnaJ and groELS operons). Prevents heat-shock induction of these operons. This is Heat-inducible transcription repressor HrcA from Tetragenococcus halophilus (Pediococcus halophilus).